The following is a 218-amino-acid chain: Adenylate kinase (218 aa).

10–15 (GAGKGT) serves as a coordination point for ATP. The interval 30–59 (STGDMLRAAVKAGSPLGLKVKDIMTSGGLV) is NMP. Residues T31, R36, 57-59 (GLV), 85-88 (GFPR), and Q92 contribute to the AMP site. An LID region spans residues 122–159 (GRRVHEASGRVYHVKHNAPKTEGVDDETGEPLVQRDDD). Residues R123 and 132-133 (VY) each bind ATP. Residues R156 and R167 each contribute to the AMP site. Position 203 (G203) interacts with ATP.

The protein belongs to the adenylate kinase family. Monomer.

Its subcellular location is the cytoplasm. It catalyses the reaction AMP + ATP = 2 ADP. Its pathway is purine metabolism; AMP biosynthesis via salvage pathway; AMP from ADP: step 1/1. Catalyzes the reversible transfer of the terminal phosphate group between ATP and AMP. Plays an important role in cellular energy homeostasis and in adenine nucleotide metabolism. The polypeptide is Adenylate kinase (Saccharophagus degradans (strain 2-40 / ATCC 43961 / DSM 17024)).